A 423-amino-acid chain; its full sequence is Lysosomal acid phosphatase (423 aa).

A signal peptide spans 1–30 (MAGKRSGWSRAALLQLLLGVNLVVMPPTQA). Over 31 to 380 (RSLRFVTLLY…QVASGPADTE (350 aa)) the chain is Lumenal. His42 functions as the Nucleophile in the catalytic mechanism. Asn92, Asn133, Asn167, Asn177, Asn191, and Asn267 each carry an N-linked (GlcNAc...) asparagine glycan. 3 disulfide bridges follow: Cys159–Cys370, Cys212–Cys310, and Cys345–Cys349. Asp287 serves as the catalytic Proton donor. Residues Asn322 and Asn331 are each glycosylated (N-linked (GlcNAc...) asparagine). A helical transmembrane segment spans residues 381–401 (VIVALAVCGSILFLLIVLLLT). The Cytoplasmic portion of the chain corresponds to 402–423 (VLFRMQAQPPGYRHVADGEDHA).

Belongs to the histidine acid phosphatase family. In terms of processing, the membrane-bound form is converted to the soluble form by sequential proteolytic processing. First, the C-terminal cytoplasmic tail is removed. Cleavage by a lysosomal protease releases the soluble form in the lysosome lumen.

The protein resides in the lysosome membrane. It is found in the lysosome lumen. The catalysed reaction is a phosphate monoester + H2O = an alcohol + phosphate. The protein is Lysosomal acid phosphatase (ACP2) of Pongo abelii (Sumatran orangutan).